The sequence spans 301 residues: Probable alpha-L-glutamate ligase 1 (301 aa).

The 184-residue stretch at 104–287 folds into the ATP-grasp domain; the sequence is MQLMSRRGIG…VAGAIIEFVE (184 aa). ATP contacts are provided by residues Lys-141, 178–179, Asp-187, and 211–213; these read EY and RSN. Mg(2+)-binding residues include Asp-248, Glu-260, and Asn-262. Mn(2+) contacts are provided by Asp-248, Glu-260, and Asn-262.

Belongs to the RimK family. Mg(2+) serves as cofactor. The cofactor is Mn(2+).

This chain is Probable alpha-L-glutamate ligase 1, found in Shewanella putrefaciens (strain CN-32 / ATCC BAA-453).